We begin with the raw amino-acid sequence, 249 residues long: MEALMIRGVLEVHTDFTRQNVMIMEPQVLDFTVRGDKLWLHTEHGLLVSMAEYRSELLCTSAFLGYSAVFLLETEDAVTQVRLSDLRLKHRCGIVKADNLLHFALCTVISCVENCNLTRKCLHDLLQYLDAVNVRESFGRLLHHSARRLICSALYLLFEEKEPHIVQYVPATFVLFQQTRHTCLQLVARFFFRLTGQDEAHSFSLKLTERKTVDGWPVGLGLLDVLNANYPNLPSPPKLPPRWERGEEE.

It belongs to the herpesviridae cytoplasmic envelopment protein 1 family.

It is found in the virion. It localises to the virion tegument. Its subcellular location is the host cytoplasm. The protein resides in the host Golgi apparatus. Functionally, plays a critical role in cytoplasmic virus egress. Participates in the final step of tegumentation and envelope acquisition within the host cytoplasm. This chain is Cytoplasmic envelopment protein 1 (UL103), found in Homo sapiens (Human).